A 427-amino-acid chain; its full sequence is MSNNQILFERAQKTIPGGVNSPVRAFRSVGGTPRFVSRAQGPYFWDADGKQYIDYIGSWGPMIVGHVHPEVLSAVQNVLADGFSFGAPTEAEIEIAEEICKLVPSIEQVRMVSSGTEATMSALRLARGFTGRSRIVKFEGCYHGHADSLLVKAGSGLLTFGNPTSAGVPADIAKHTTVLEYNNVAALEEAFGAFGDEIAAVIVEPVAGNMNLVRGTPEFLNALRALCTKHGAVLIFDEVMCGFRVALGGAQQHYGITADLTCLGKVIGGGMPAAAFGGRRDIMAHLAPLGGVYQAGTLSGNPIAVAAGLKTLQLIQAPGFYDALTAQTKRLADGLAAEARAAGVPFAADSIGAMFGLYFAERVPTSFAEVTKSDTERFNRFFHLMLDEGVYFAPSAYEAGFVSSTHDDAVIDATLAAARRAFAALAA.

Lys-265 carries the post-translational modification N6-(pyridoxal phosphate)lysine.

It belongs to the class-III pyridoxal-phosphate-dependent aminotransferase family. HemL subfamily. As to quaternary structure, homodimer. Requires pyridoxal 5'-phosphate as cofactor.

The protein resides in the cytoplasm. The enzyme catalyses (S)-4-amino-5-oxopentanoate = 5-aminolevulinate. The protein operates within porphyrin-containing compound metabolism; protoporphyrin-IX biosynthesis; 5-aminolevulinate from L-glutamyl-tRNA(Glu): step 2/2. The protein is Glutamate-1-semialdehyde 2,1-aminomutase of Burkholderia ambifaria (strain ATCC BAA-244 / DSM 16087 / CCUG 44356 / LMG 19182 / AMMD) (Burkholderia cepacia (strain AMMD)).